The primary structure comprises 576 residues: Arginine--tRNA ligase (576 aa).

Residues 122-132 carry the 'HIGH' region motif; it reads PNVAKEMHVGH.

It belongs to the class-I aminoacyl-tRNA synthetase family. In terms of assembly, monomer.

Its subcellular location is the cytoplasm. The catalysed reaction is tRNA(Arg) + L-arginine + ATP = L-arginyl-tRNA(Arg) + AMP + diphosphate. The sequence is that of Arginine--tRNA ligase from Sodalis glossinidius (strain morsitans).